Reading from the N-terminus, the 184-residue chain is dCTP deaminase (184 aa).

Residues 97-102 and aspartate 113 contribute to the dCTP site; that span reads RSTFAR. Catalysis depends on glutamate 123, which acts as the Proton donor/acceptor. Tyrosine 155 and glutamine 162 together coordinate dCTP.

The protein belongs to the dCTP deaminase family. As to quaternary structure, homotrimer.

The enzyme catalyses dCTP + H2O + H(+) = dUTP + NH4(+). It functions in the pathway pyrimidine metabolism; dUMP biosynthesis; dUMP from dCTP (dUTP route): step 1/2. Catalyzes the deamination of dCTP to dUTP. This chain is dCTP deaminase, found in Saccharolobus solfataricus (strain ATCC 35092 / DSM 1617 / JCM 11322 / P2) (Sulfolobus solfataricus).